We begin with the raw amino-acid sequence, 250 residues long: Ribosomal RNA small subunit methyltransferase J (250 aa).

Residues 101–102 (RD), 117–118 (ER), 153–154 (SS), and Asp171 contribute to the S-adenosyl-L-methionine site.

It belongs to the methyltransferase superfamily. RsmJ family.

Its subcellular location is the cytoplasm. It carries out the reaction guanosine(1516) in 16S rRNA + S-adenosyl-L-methionine = N(2)-methylguanosine(1516) in 16S rRNA + S-adenosyl-L-homocysteine + H(+). Functionally, specifically methylates the guanosine in position 1516 of 16S rRNA. This is Ribosomal RNA small subunit methyltransferase J from Cronobacter sakazakii (strain ATCC BAA-894) (Enterobacter sakazakii).